The sequence spans 174 residues: Endoribonuclease YbeY (174 aa).

Residues H129, H133, and H139 each coordinate Zn(2+).

Belongs to the endoribonuclease YbeY family. The cofactor is Zn(2+).

The protein resides in the cytoplasm. Single strand-specific metallo-endoribonuclease involved in late-stage 70S ribosome quality control and in maturation of the 3' terminus of the 16S rRNA. This Lactobacillus delbrueckii subsp. bulgaricus (strain ATCC BAA-365 / Lb-18) protein is Endoribonuclease YbeY.